The following is a 121-amino-acid chain: Holin-like protein CidA (121 aa).

3 helical membrane-spanning segments follow: residues 27–47 (VHLP…SLKF), 58–78 (GADF…VAVI), and 89–109 (IDLI…TGIL).

The protein belongs to the CidA/LrgA family. CidA subfamily.

The protein resides in the cell membrane. Increases the activity of extracellular murein hydrolases possibly by mediating their export via hole formation. Inhibited by the antiholin-like proteins LrgAB. In an unstressed cell, the LrgAB products probably inhibit the function of the CidA protein. When a cell is stressed by the addition of antibiotics or by other factors in the environment, CidA possibly oligomerizes within the bacterial cell membrane, creating lesions that disrupt the proton motive force, which in turn results in loss of cell viability. These lesions are also hypothesized to regulate the subsequent cell lysis by either allowing the murein hydrolases access to the cell wall substrate and/or regulating their activity by a possible change in the cell wall pH that results from loss of membrane potential. The sequence is that of Holin-like protein CidA from Bacillus cytotoxicus (strain DSM 22905 / CIP 110041 / 391-98 / NVH 391-98).